The following is a 125-amino-acid chain: Protein ApaG (125 aa).

Positions 1–125 (MNDTPRVCVQ…FRLAIATHIH (125 aa)) constitute an ApaG domain.

The sequence is that of Protein ApaG from Erwinia tasmaniensis (strain DSM 17950 / CFBP 7177 / CIP 109463 / NCPPB 4357 / Et1/99).